Here is a 368-residue protein sequence, read N- to C-terminus: Alanine racemase (368 aa).

The Proton acceptor; specific for D-alanine role is filled by Lys40. Position 40 is an N6-(pyridoxal phosphate)lysine (Lys40). Position 134 (Arg134) interacts with substrate. Tyr263 serves as the catalytic Proton acceptor; specific for L-alanine. Substrate is bound at residue Met310.

This sequence belongs to the alanine racemase family. It depends on pyridoxal 5'-phosphate as a cofactor.

The catalysed reaction is L-alanine = D-alanine. It participates in amino-acid biosynthesis; D-alanine biosynthesis; D-alanine from L-alanine: step 1/1. In terms of biological role, catalyzes the interconversion of L-alanine and D-alanine. May also act on other amino acids. This is Alanine racemase (alr) from Listeria innocua serovar 6a (strain ATCC BAA-680 / CLIP 11262).